A 521-amino-acid chain; its full sequence is Bifunctional purine biosynthesis protein PurH (521 aa).

The MGS-like domain occupies 1 to 145 (MIKQALISVS…KNHRDVTVVV (145 aa)).

Belongs to the PurH family.

The catalysed reaction is (6R)-10-formyltetrahydrofolate + 5-amino-1-(5-phospho-beta-D-ribosyl)imidazole-4-carboxamide = 5-formamido-1-(5-phospho-D-ribosyl)imidazole-4-carboxamide + (6S)-5,6,7,8-tetrahydrofolate. It carries out the reaction IMP + H2O = 5-formamido-1-(5-phospho-D-ribosyl)imidazole-4-carboxamide. It participates in purine metabolism; IMP biosynthesis via de novo pathway; 5-formamido-1-(5-phospho-D-ribosyl)imidazole-4-carboxamide from 5-amino-1-(5-phospho-D-ribosyl)imidazole-4-carboxamide (10-formyl THF route): step 1/1. It functions in the pathway purine metabolism; IMP biosynthesis via de novo pathway; IMP from 5-formamido-1-(5-phospho-D-ribosyl)imidazole-4-carboxamide: step 1/1. This is Bifunctional purine biosynthesis protein PurH from Burkholderia cenocepacia (strain ATCC BAA-245 / DSM 16553 / LMG 16656 / NCTC 13227 / J2315 / CF5610) (Burkholderia cepacia (strain J2315)).